The following is an 879-amino-acid chain: Phosphoenolpyruvate carboxylase (879 aa).

Active-site residues include His138 and Lys545.

This sequence belongs to the PEPCase type 1 family. Requires Mg(2+) as cofactor.

It catalyses the reaction oxaloacetate + phosphate = phosphoenolpyruvate + hydrogencarbonate. Forms oxaloacetate, a four-carbon dicarboxylic acid source for the tricarboxylic acid cycle. The chain is Phosphoenolpyruvate carboxylase (ppc) from Haemophilus influenzae (strain ATCC 51907 / DSM 11121 / KW20 / Rd).